We begin with the raw amino-acid sequence, 112 residues long: MTELAQMKCEACQADAPKVTDEELAQLIAKIPDWGVEVRGGVMQLERVYKFKNFKLAMEFTNKLADLAEADFHHPGILTEWGKVTVTWWSHSIKGLHKNDFIMAAKTDTLFQ.

Belongs to the pterin-4-alpha-carbinolamine dehydratase family.

The enzyme catalyses (4aS,6R)-4a-hydroxy-L-erythro-5,6,7,8-tetrahydrobiopterin = (6R)-L-erythro-6,7-dihydrobiopterin + H2O. The sequence is that of Putative pterin-4-alpha-carbinolamine dehydratase from Shewanella pealeana (strain ATCC 700345 / ANG-SQ1).